The primary structure comprises 195 residues: uncharacterized protein (195 aa).

The first 21 residues, 1 to 21 (MHFSSCVLVSALAIVTNVATA), serve as a signal peptide directing secretion. N-linked (GlcNAc...) asparagine glycans are attached at residues Asn-62 and Asn-109. Positions 119–141 (DWDEDTVTGENAPDSGEPFSTSH) are disordered.

The protein resides in the secreted. This is an uncharacterized protein from Arthroderma benhamiae (strain ATCC MYA-4681 / CBS 112371) (Trichophyton mentagrophytes).